A 969-amino-acid chain; its full sequence is MSVDFVKIAEKWQKRWEEDKIFENPSKLKYTEQEKKDKFFITAAFPYLNGVLHAGHLRTFTIPEITARYQRMNNKTVLWTFGFHVSGTPIIGLAELLKKQAPETIWAYNKLHNIPMGELQTLTTPENIVNYFSKKATESFKKMGFALDWRRNFKTDDETFKKFVEWQFLKLKEKNLIVKGSHPVRYCPSCDNPVEDHDLLKGEEATLQEYILLKFKTKLNIEIDGEDKEYECIIPMATLRPETIYGVVNAWINPNDTYHIIKVYDEVQSQEEGSDEISLKYNGIWIVSKEASDKLKNQDRTVELIKEIKGEELVGKIVINPVNNKEVPLYPADFVSSEMGTGCVMSVPAHAPKDFVALRDYYSSINKELTDDELISLIKIDGYGKYPAKEIVEKMGITNQKDEKLEDATHTIYKQEFHKGILNENCGEYEGIAVRDIKDKLASDFINNNMAETLQEFSIPEVVCRCGEKCIVKTVKGQWFITYSDLEWKKKAHNWVDKMNFVPETIRMDFHNKIDWMKDKACARKKGLGTRFPFDKDWVIESLSDSTLYMAYYTVAKTINTNNILPEQLIPELFDYVYYGKGDINEISNNTKIPVELINEMRNEFEYYYPLDWRCSAKDLVPNHLTFMIFNHVALFDDEKYYPKGIVVNGYVTIEGKKLSKSKGPVLPIEEVATNYGPDVGRFYITTCAELPHDADVKFKEMEHARDNLIRFYELATELKDTEKTITELSTIDKWLLHKVHSDLKIINESYNEFQLRKIGTLFYGLTHNLKWYKRRGGNNNQLLKYVVEIWTKVLAPITPHLCEEIWEMFGYNKNNNYISNETFPQLDNSYINENCELGEEFIKNTMDDIRNIINIANIAPKTIYLYTADDWKFEVLKIMMENKGAPVNKMMPLIMKNAELRRYGKEIPKLINEIVKNGISNPIDEENILNDAKQFLENEFQCKIIVNGEDIGNKKRFAIPNKVAIYIE.

The 'HIGH' region signature appears at 46–56 (PYLNGVLHAGH). The short motif at 658–662 (KLSKS) is the 'KMSKS' region element. Lys-661 provides a ligand contact to ATP.

The protein belongs to the class-I aminoacyl-tRNA synthetase family.

The protein localises to the cytoplasm. The enzyme catalyses tRNA(Leu) + L-leucine + ATP = L-leucyl-tRNA(Leu) + AMP + diphosphate. This is Leucine--tRNA ligase from Methanococcus aeolicus (strain ATCC BAA-1280 / DSM 17508 / OCM 812 / Nankai-3).